Consider the following 299-residue polypeptide: MQPNKPLVVALMGPTASGKTELAIDIAKKINSNIHNIDSRQIYIDMDIGTAKPTAVQQSQVNHFLIDICLPSKPINLHDFQSIAKTSIERDLEKKGLTLLVGGSGLYLQALIGGLNPPAVPPQKFLRDQLKKIDKAERHKLLKLCDPFSAQRIHPEDSIRIIRALEVFYATGRMFSKAKNMRPTPWRVLELGLNPENLTSRIQLRTREMYKKGLVEETGDLINKYGNNLQLLKTIGYGEARSMINGKINYEEALEITIKRTCQLAKRQKTWFRNKHNSKWLNDENALPEALASIYEFLG.

13–20 (GPTASGKT) contacts ATP. 15–20 (TASGKT) contacts substrate. Residues 38–41 (DSRQ) are interaction with substrate tRNA.

Belongs to the IPP transferase family. In terms of assembly, monomer. Mg(2+) serves as cofactor.

It catalyses the reaction adenosine(37) in tRNA + dimethylallyl diphosphate = N(6)-dimethylallyladenosine(37) in tRNA + diphosphate. Catalyzes the transfer of a dimethylallyl group onto the adenine at position 37 in tRNAs that read codons beginning with uridine, leading to the formation of N6-(dimethylallyl)adenosine (i(6)A). This is tRNA dimethylallyltransferase from Prochlorococcus marinus (strain NATL2A).